Reading from the N-terminus, the 138-residue chain is Photosystem II extrinsic protein U (138 aa).

The N-terminal stretch at 1 to 28 is a signal peptide; it reads MSRVVSALMGLVLMFGCAFFSVQPQAQA. Positions 29–42 are excised as a propeptide; the sequence is LDLSNGFVSAAVLG.

Belongs to the PsbU family. As to quaternary structure, PSII is composed of 1 copy each of membrane proteins PsbA, PsbB, PsbC, PsbD, PsbE, PsbF, PsbH, PsbI, PsbJ, PsbK, PsbL, PsbM, PsbT, PsbX, PsbY, PsbZ, Psb30/Ycf12, peripheral proteins PsbO, CyanoQ (PsbQ), PsbU, PsbV and a large number of cofactors. It forms dimeric complexes.

It localises to the cellular thylakoid membrane. One of the extrinsic, lumenal subunits of photosystem II (PSII). PSII is a light-driven water plastoquinone oxidoreductase, using light energy to abstract electrons from H(2)O, generating a proton gradient subsequently used for ATP formation. The extrinsic proteins stabilize the structure of photosystem II oxygen-evolving complex (OEC), the ion environment of oxygen evolution and protect the OEC against heat-induced inactivation. The chain is Photosystem II extrinsic protein U from Picosynechococcus sp. (strain ATCC 27264 / PCC 7002 / PR-6) (Agmenellum quadruplicatum).